A 268-amino-acid chain; its full sequence is Tryptophan synthase alpha chain (268 aa).

Active-site proton acceptor residues include Glu47 and Asp58.

It belongs to the TrpA family. In terms of assembly, tetramer of two alpha and two beta chains.

The protein resides in the plastid. The protein localises to the chloroplast. The enzyme catalyses (1S,2R)-1-C-(indol-3-yl)glycerol 3-phosphate + L-serine = D-glyceraldehyde 3-phosphate + L-tryptophan + H2O. Its pathway is amino-acid biosynthesis; L-tryptophan biosynthesis; L-tryptophan from chorismate: step 5/5. Its function is as follows. The alpha subunit is responsible for the aldol cleavage of indoleglycerol phosphate to indole and glyceraldehyde 3-phosphate. The polypeptide is Tryptophan synthase alpha chain (Gracilaria tenuistipitata var. liui (Red alga)).